A 363-amino-acid polypeptide reads, in one-letter code: Phospho-N-acetylmuramoyl-pentapeptide-transferase (363 aa).

Transmembrane regions (helical) follow at residues 27–47 (AGAA…PLIA), 76–96 (TMGG…WADL), 97–117 (TDGY…VGFA), 137–157 (LGCE…LMPA), 171–191 (WLLP…TGFG), 202–222 (GLAI…SYLV), 226–246 (VFAD…CVFC), 248–268 (ALVG…AVFM), 271–291 (TGSL…KHEL), 292–312 (VLCI…IQVF), and 340–360 (KIVI…LATL).

This sequence belongs to the glycosyltransferase 4 family. MraY subfamily. Mg(2+) serves as cofactor.

It is found in the cell inner membrane. The catalysed reaction is UDP-N-acetyl-alpha-D-muramoyl-L-alanyl-gamma-D-glutamyl-meso-2,6-diaminopimeloyl-D-alanyl-D-alanine + di-trans,octa-cis-undecaprenyl phosphate = di-trans,octa-cis-undecaprenyl diphospho-N-acetyl-alpha-D-muramoyl-L-alanyl-D-glutamyl-meso-2,6-diaminopimeloyl-D-alanyl-D-alanine + UMP. Its pathway is cell wall biogenesis; peptidoglycan biosynthesis. Its function is as follows. Catalyzes the initial step of the lipid cycle reactions in the biosynthesis of the cell wall peptidoglycan: transfers peptidoglycan precursor phospho-MurNAc-pentapeptide from UDP-MurNAc-pentapeptide onto the lipid carrier undecaprenyl phosphate, yielding undecaprenyl-pyrophosphoryl-MurNAc-pentapeptide, known as lipid I. The sequence is that of Phospho-N-acetylmuramoyl-pentapeptide-transferase from Gluconacetobacter diazotrophicus (strain ATCC 49037 / DSM 5601 / CCUG 37298 / CIP 103539 / LMG 7603 / PAl5).